We begin with the raw amino-acid sequence, 282 residues long: Acetylglutamate kinase (282 aa).

Substrate contacts are provided by residues 62 to 63 (GG), Arg84, and Asn178. Residues Lys196, Ser214, and 266-269 (EIFS) each bind L-arginine.

In terms of assembly, homohexamer.

The protein localises to the cytoplasm. The catalysed reaction is N-acetyl-L-glutamate + ATP = N-acetyl-L-glutamyl 5-phosphate + ADP. Its pathway is amino-acid biosynthesis; L-arginine biosynthesis; N(2)-acetyl-L-ornithine from L-glutamate: step 2/4. Its activity is regulated as follows. Allosterically inhibited by arginine. Its function is as follows. Catalyzes the ATP-dependent phosphorylation of N-acetyl-L-glutamate. This Thermotoga maritima (strain ATCC 43589 / DSM 3109 / JCM 10099 / NBRC 100826 / MSB8) protein is Acetylglutamate kinase.